The sequence spans 262 residues: Methionine-rich nacre protein (262 aa).

An N-terminal signal peptide occupies residues 1 to 22; that stretch reads MSIMRRILCLAVVIFIINDVSS. Over residues 26 to 35 the composition is skewed to low complexity; that stretch reads GNNKNWKKNG. The disordered stretch occupies residues 26-84; sequence GNNKNWKKNGMSLSSPGNKKPTGNNAVPQKSKMNNMNQNSLSQPKRSSPPGNSMYNMAN. Positions 36-84 are enriched in polar residues; sequence MSLSSPGNKKPTGNNAVPQKSKMNNMNQNSLSQPKRSSPPGNSMYNMAN.

In terms of tissue distribution, expressed in mantle and, after secretion, incorporated into acid-insoluble nacre matrix of the shell (at protein level). Expressed primarily in the mantle with highest level in the mantle pallium and lower level in the mantle edge.

The protein resides in the secreted. The polypeptide is Methionine-rich nacre protein (Pinctada maxima (Silver-lipped pearl oyster)).